A 503-amino-acid chain; its full sequence is Anaerobic nitric oxide reductase flavorubredoxin (503 aa).

The tract at residues 30-210 (LQGSSYNSYL…PFSRLVTAKI (181 aa)) is zinc metallo-hydrolase. Fe cation-binding residues include H79, E81, D83, H147, D166, and H227. The Flavodoxin-like domain occupies 254–393 (ITLFYDTMSN…ICREHGREIA (140 aa)). Residues 260-264 (TMSNN) and 342-369 (AFGSYGWNGGAVDRIQTRLMDAGFETTL) contribute to the FMN site. The region spanning 451–502 (NGCMQCSVCQWIYDPALGEPMQDVTPGTMWSDVPDSFLCPECGLGKDVFNPI) is the Rubredoxin-like domain. C456, C459, C489, and C492 together coordinate Fe cation.

This sequence in the N-terminal section; belongs to the zinc metallo-hydrolase group 3 family. As to quaternary structure, homotetramer. Fe cation serves as cofactor. The cofactor is FMN.

It localises to the cytoplasm. It participates in nitrogen metabolism; nitric oxide reduction. Anaerobic nitric oxide reductase; uses NADH to detoxify nitric oxide (NO), protecting several 4Fe-4S NO-sensitive enzymes. Has at least 2 reductase partners, only one of which (NorW, flavorubredoxin reductase) has been identified. NO probably binds to the di-iron center; electrons enter from the NorW at rubredoxin and are transferred sequentially to the FMN center and the di-iron center. Also able to function as an aerobic oxygen reductase. In Pectobacterium carotovorum subsp. carotovorum (strain PC1), this protein is Anaerobic nitric oxide reductase flavorubredoxin.